The primary structure comprises 289 residues: Heme oxygenase 1 (289 aa).

Topologically, residues 1 to 266 (MERPQLDSMS…SQISTSSSQT (266 aa)) are cytoplasmic. Heme b-binding residues include K18, H25, Y134, and R183. Positions 225-261 (HKDQSPSQTEFLRQRPASLVQDTTSAETPRGKSQIST) are disordered. Residues S229 and S242 each carry the phosphoserine modification. Positions 244–261 (VQDTTSAETPRGKSQIST) are enriched in polar residues. The chain crosses the membrane as a helical; Anchor for type IV membrane protein span at residues 267-289 (PLLRWVLTLSFLLATVAVGIYAM).

The protein belongs to the heme oxygenase family. In terms of assembly, homodimer and higher order homooligomer. Oligomerization is crucial for its stability and function in the endoplasmic reticulum. Interacts with FLVCR2; this interaction is potentiated in the presence of heme. Post-translationally, a soluble form arises by proteolytic removal of the membrane anchor.

The protein localises to the endoplasmic reticulum membrane. The enzyme catalyses heme b + 3 reduced [NADPH--hemoprotein reductase] + 3 O2 = biliverdin IXalpha + CO + Fe(2+) + 3 oxidized [NADPH--hemoprotein reductase] + 3 H2O + H(+). Inhibited by metalloporphyrins such as Sn- and Zn-protoporphyrins. In terms of biological role, catalyzes the oxidative cleavage of heme at the alpha-methene bridge carbon, released as carbon monoxide (CO), to generate biliverdin IXalpha, while releasing the central heme iron chelate as ferrous iron. Affords protection against programmed cell death and this cytoprotective effect relies on its ability to catabolize free heme and prevent it from sensitizing cells to undergo apoptosis. Catalyzes the oxidative cleavage of heme at the alpha-methene bridge carbon, released as carbon monoxide (CO), to generate biliverdin IXalpha, while releasing the central heme iron chelate as ferrous iron. The protein is Heme oxygenase 1 (Hmox1) of Rattus norvegicus (Rat).